We begin with the raw amino-acid sequence, 1608 residues long: Mitogen-activated protein kinase kinase kinase 4 (1608 aa).

The segment covering 1–23 (MREAAAALVPPPAFAVTPAAAME) has biased composition (low complexity). Disordered stretches follow at residues 1 to 136 (MREA…ENVE) and 429 to 478 (IPSP…RQPI). The span at 24–37 (EPPPPPPPPPPPPE) shows a compositional bias: pro residues. Residues 66–76 (SDLEDFSDETN) are compositionally biased toward acidic residues. Ser-84 carries the phosphoserine modification. The span at 91–101 (QMKRMSTKHQR) shows a compositional bias: basic residues. Phosphoserine is present on Ser-431. At Thr-447 the chain carries Phosphothreonine. Phosphoserine is present on residues Ser-456 and Ser-457. The segment covering 456–466 (SSTDESEEEQI) has biased composition (acidic residues). Thr-458 bears the Phosphothreonine mark. Phosphoserine occurs at positions 461, 481, and 499. 3 disordered regions span residues 1157–1190 (CHSD…GSPA), 1202–1231 (ASRP…SVPE), and 1244–1274 (FRSL…TRRS). Polar residues predominate over residues 1217–1230 (SISSAHDTRGSSVP). Phosphoserine is present on residues Ser-1252 and Ser-1274. The span at 1252-1261 (SPTEERDEPA) shows a compositional bias: basic and acidic residues. Residues 1343–1601 (WQRGNKIGEG…ASQLLDHSFV (259 aa)) enclose the Protein kinase domain. ATP-binding positions include 1349-1357 (IGEGQYGKV) and Lys-1372. The Proton acceptor role is filled by Asp-1463.

The protein belongs to the protein kinase superfamily. STE Ser/Thr protein kinase family. MAP kinase kinase kinase subfamily. In terms of assembly, monomer and homodimer. Homodimerization enhances kinase activity. Interacts with TRAF4; this promotes homodimerization. Binds both upstream activators and downstream substrates in multimolecular complexes. Interacts with AXIN1 and DIXDC1; interaction with DIXDC1 prevents interaction with AXIN1. Interacts with GADD45 and MAP2K6. Interacts with ZFP36; this interaction enhances the association with SH3KBP1/CIN85. Interacts with SH3KBP1; this interaction enhances the association with ZFP36. Interacts with CDC42. Mg(2+) serves as cofactor. As to expression, expressed at high levels in heart, placenta, skeletal muscle and pancreas, and at lower levels in other tissues.

It localises to the cytoplasm. Its subcellular location is the perinuclear region. The enzyme catalyses L-seryl-[protein] + ATP = O-phospho-L-seryl-[protein] + ADP + H(+). The catalysed reaction is L-threonyl-[protein] + ATP = O-phospho-L-threonyl-[protein] + ADP + H(+). Its activity is regulated as follows. N-terminal autoinhibitory domain interacts with the C-terminal kinase domain, inhibiting kinase activity, and preventing interaction with its substrate, MAP2K6. The GADD45 proteins activate the kinase by binding to the N-terminal domain. Activated by phosphorylation on Thr-1505. In terms of biological role, component of a protein kinase signal transduction cascade. Activates the CSBP2, P38 and JNK MAPK pathways, but not the ERK pathway. Specifically phosphorylates and activates MAP2K4 and MAP2K6. In Homo sapiens (Human), this protein is Mitogen-activated protein kinase kinase kinase 4 (MAP3K4).